The chain runs to 229 residues: Lantibiotic transport ATP-binding protein SrtF (229 aa).

In terms of domain architecture, ABC transporter spans Leu-2–Phe-225. Position 34-41 (Gly-34–Ser-41) interacts with ATP.

It belongs to the ABC transporter superfamily.

Implicated in the export process of the lantibiotic SrtA. The protein is Lantibiotic transport ATP-binding protein SrtF (srtF) of Streptococcus pyogenes serotype M1.